A 289-amino-acid polypeptide reads, in one-letter code: Glucosamine-6-phosphate deaminase 1 (289 aa).

At lysine 64 the chain carries N6-acetyllysine. Aspartate 72 acts as the Proton acceptor; for enolization step in catalysis. Aspartate 141 serves as the catalytic For ring-opening step. Residue histidine 143 is the Proton acceptor; for ring-opening step of the active site. Glutamate 148 (for ring-opening step) is an active-site residue. Threonine 161 carries the phosphothreonine modification.

This sequence belongs to the glucosamine/galactosamine-6-phosphate isomerase family. In terms of assembly, homohexamer.

It is found in the cytoplasm. The enzyme catalyses alpha-D-glucosamine 6-phosphate + H2O = beta-D-fructose 6-phosphate + NH4(+). It functions in the pathway nucleotide-sugar biosynthesis; UDP-N-acetyl-alpha-D-glucosamine biosynthesis; alpha-D-glucosamine 6-phosphate from D-fructose 6-phosphate: step 1/1. Allosterically activated by N-acetylglucosamine-6-phosphate (GlcNAc6P). Its function is as follows. Catalyzes the reversible conversion of alpha-D-glucosamine 6-phosphate (GlcN-6P) into beta-D-fructose 6-phosphate (Fru-6P) and ammonium ion, a regulatory reaction step in de novo uridine diphosphate-N-acetyl-alpha-D-glucosamine (UDP-GlcNAc) biosynthesis via hexosamine pathway. Deamination is coupled to aldo-keto isomerization mediating the metabolic flux from UDP-GlcNAc toward Fru-6P. At high ammonium level can drive amination and isomerization of Fru-6P toward hexosamines and UDP-GlcNAc synthesis. Has a role in fine tuning the metabolic fluctuations of cytosolic UDP-GlcNAc and their effects on hyaluronan synthesis that occur during tissue remodeling. Seems to trigger calcium oscillations in mammalian eggs. These oscillations serve as the essential trigger for egg activation and early development of the embryo. The polypeptide is Glucosamine-6-phosphate deaminase 1 (Homo sapiens (Human)).